Reading from the N-terminus, the 151-residue chain is Globin CTT-X (151 aa).

Positions 6–150 (TLDAHEVEQV…AFSVIFEVLE (145 aa)) constitute a Globin domain. Heme b-binding residues include His-64 and His-99.

The protein belongs to the globin family. Homodimer.

This Chironomus thummi thummi (Midge) protein is Globin CTT-X (CTT-10).